We begin with the raw amino-acid sequence, 547 residues long: Glucose-6-phosphate isomerase 1 (547 aa).

Glutamate 353 functions as the Proton donor in the catalytic mechanism. Residues histidine 384 and lysine 512 contribute to the active site.

It belongs to the GPI family.

It is found in the cytoplasm. The catalysed reaction is alpha-D-glucose 6-phosphate = beta-D-fructose 6-phosphate. It functions in the pathway carbohydrate biosynthesis; gluconeogenesis. The protein operates within carbohydrate degradation; glycolysis; D-glyceraldehyde 3-phosphate and glycerone phosphate from D-glucose: step 2/4. Catalyzes the reversible isomerization of glucose-6-phosphate to fructose-6-phosphate. The protein is Glucose-6-phosphate isomerase 1 of Chromobacterium violaceum (strain ATCC 12472 / DSM 30191 / JCM 1249 / CCUG 213 / NBRC 12614 / NCIMB 9131 / NCTC 9757 / MK).